The following is a 121-amino-acid chain: Small ribosomal subunit protein uS13 (121 aa).

The disordered stretch occupies residues 91-121 (HRKGLPMRGQRTRTNARTRKGPRKAGVALKK).

The protein belongs to the universal ribosomal protein uS13 family. In terms of assembly, part of the 30S ribosomal subunit. Forms a loose heterodimer with protein S19. Forms two bridges to the 50S subunit in the 70S ribosome.

Located at the top of the head of the 30S subunit, it contacts several helices of the 16S rRNA. In the 70S ribosome it contacts the 23S rRNA (bridge B1a) and protein L5 of the 50S subunit (bridge B1b), connecting the 2 subunits; these bridges are implicated in subunit movement. Contacts the tRNAs in the A and P-sites. The polypeptide is Small ribosomal subunit protein uS13 (Cupriavidus taiwanensis (strain DSM 17343 / BCRC 17206 / CCUG 44338 / CIP 107171 / LMG 19424 / R1) (Ralstonia taiwanensis (strain LMG 19424))).